Reading from the N-terminus, the 246-residue chain is Adenosine 5'-phosphosulfate reductase (246 aa).

The [4Fe-4S] cluster site is built by Cys131, Cys132, Cys214, and Cys217. Cys242 (nucleophile; cysteine thiosulfonate intermediate) is an active-site residue.

This sequence belongs to the PAPS reductase family. CysH subfamily. [4Fe-4S] cluster serves as cofactor.

The protein localises to the cytoplasm. It catalyses the reaction [thioredoxin]-disulfide + sulfite + AMP + 2 H(+) = adenosine 5'-phosphosulfate + [thioredoxin]-dithiol. It participates in sulfur metabolism; hydrogen sulfide biosynthesis; sulfite from sulfate. Its function is as follows. Catalyzes the formation of sulfite from adenosine 5'-phosphosulfate (APS) using thioredoxin as an electron donor. The chain is Adenosine 5'-phosphosulfate reductase from Neisseria meningitidis serogroup B (strain ATCC BAA-335 / MC58).